The following is a 746-amino-acid chain: Stromal interaction molecule 2 (746 aa).

A signal peptide spans 1 to 14; the sequence is MLLFGLLVAGVADG. Residues 15–218 lie on the Extracellular side of the membrane; it reads CDLVPRHLRG…RPPHNWMKDF (204 aa). S28 is subject to Phosphoserine. The 36-residue stretch at 67-102 folds into the EF-hand domain; sequence FSLEALQTIHKQMDDDKDGGIEVDESDEFIREDMKY. Positions 80, 82, 84, and 91 each coordinate Ca(2+). N135 carries N-linked (GlcNAc...) asparagine glycosylation. Residues 136 to 204 form the SAM domain; it reads WTLEDTLQWL…QLKALDVVLF (69 aa). Residues 219–235 form a helical membrane-spanning segment; that stretch reads ILTISIVIGVGGCWFAY. Residues 236 to 746 lie on the Cytoplasmic side of the membrane; it reads TQNKTSKEHV…IKSLFKKKSK (511 aa). Residues 247-394 adopt a coiled-coil conformation; that stretch reads KMMKDLESLQ…EKIKKKRSTV (148 aa). Disordered stretches follow at residues 490–562 and 592–651; these read PIVP…PDIL and DTAS…RGSP. Residue S523 is modified to Phosphoserine. Low complexity predominate over residues 527 to 539; the sequence is QRAQLPAHAPLAA. Basic residues predominate over residues 540–549; sequence HPRHPHHPQH. A phosphoserine mark is found at S609 and S621. Positions 625 to 637 are enriched in basic and acidic residues; that stretch reads ISRDELSLEDSSR. 6 positions are modified to phosphoserine: S640, S650, S661, S665, S680, and S697. The tract at residues 684–746 is disordered; the sequence is LSSGIPVPHP…IKSLFKKKSK (63 aa). The segment covering 723–732 has biased composition (basic and acidic residues); that stretch reads DLCHNGEKSK. Over residues 733–746 the composition is skewed to basic residues; the sequence is KPSKIKSLFKKKSK.

In terms of assembly, oligomer with STIM1. Interacts with ORAI1. In terms of processing, glycosylated. Post-translationally, phosphorylated predominantly on Ser residues.

Its subcellular location is the endoplasmic reticulum membrane. Functionally, plays a role in mediating store-operated Ca(2+) entry (SOCE), a Ca(2+) influx following depletion of intracellular Ca(2+) stores. Functions as a highly sensitive Ca(2+) sensor in the endoplasmic reticulum which activates both store-operated and store-independent Ca(2+)-influx. Regulates basal cytosolic and endoplasmic reticulum Ca(2+) concentrations. Upon mild variations of the endoplasmic reticulum Ca(2+) concentration, translocates from the endoplasmic reticulum to the plasma membrane where it probably activates the Ca(2+) release-activated Ca(2+) (CRAC) channels ORAI1, ORAI2 and ORAI3. May inhibit STIM1-mediated Ca(2+) influx. This is Stromal interaction molecule 2 (Stim2) from Mus musculus (Mouse).